A 477-amino-acid chain; its full sequence is Probable cytosol aminopeptidase (477 aa).

Residues Lys-245 and Asp-250 each contribute to the Mn(2+) site. Lys-257 is a catalytic residue. Asp-268, Asp-327, and Glu-329 together coordinate Mn(2+). Residue Arg-331 is part of the active site.

The protein belongs to the peptidase M17 family. The cofactor is Mn(2+).

The protein localises to the cytoplasm. The enzyme catalyses Release of an N-terminal amino acid, Xaa-|-Yaa-, in which Xaa is preferably Leu, but may be other amino acids including Pro although not Arg or Lys, and Yaa may be Pro. Amino acid amides and methyl esters are also readily hydrolyzed, but rates on arylamides are exceedingly low.. It catalyses the reaction Release of an N-terminal amino acid, preferentially leucine, but not glutamic or aspartic acids.. In terms of biological role, presumably involved in the processing and regular turnover of intracellular proteins. Catalyzes the removal of unsubstituted N-terminal amino acids from various peptides. The sequence is that of Probable cytosol aminopeptidase from Exiguobacterium sibiricum (strain DSM 17290 / CCUG 55495 / CIP 109462 / JCM 13490 / 255-15).